The primary structure comprises 265 residues: MQYGDKTTFKQSLAIQGRVINALLMREIITRYGRQNIGFFWLFVEPLLMTFFIVMMWKFIRADKFSTLNMIAFVMTGYPMAMMWRNASNRAIGSISANLSLLYHRNVRVLDTIFTRVLLEVAGASIAQILFMAILVMIDWIDAPHDVFYMLIAWFLMAMFAFGLGLIICAIAQQFDVFGKIWGTLSFVLLPISGAFFFVHNLPAQAQSIALWFPMIHGTEMFRHGYFGDTVVTYESIGFLVVSDLALLLLGLVMVKNFSKGVEPQ.

6 helical membrane-spanning segments follow: residues isoleucine 37 to tryptophan 57, lysine 64 to tryptophan 84, leucine 118 to isoleucine 138, leucine 151 to isoleucine 171, phenylalanine 178 to phenylalanine 198, and glutamate 235 to valine 255. An ABC transmembrane type-2 domain is found at isoleucine 37–phenylalanine 258.

It belongs to the ABC-2 integral membrane protein family.

The protein resides in the cell inner membrane. Its function is as follows. May form an ATP-driven capsule polysaccharide export apparatus, in association with the BexA, BexC and BexD proteins. This is Capsule polysaccharide export inner-membrane protein BexB (bexB) from Haemophilus influenzae.